The following is a 243-amino-acid chain: 3-deoxy-manno-octulosonate cytidylyltransferase (243 aa).

This sequence belongs to the KdsB family.

It is found in the cytoplasm. The catalysed reaction is 3-deoxy-alpha-D-manno-oct-2-ulosonate + CTP = CMP-3-deoxy-beta-D-manno-octulosonate + diphosphate. It participates in nucleotide-sugar biosynthesis; CMP-3-deoxy-D-manno-octulosonate biosynthesis; CMP-3-deoxy-D-manno-octulosonate from 3-deoxy-D-manno-octulosonate and CTP: step 1/1. The protein operates within bacterial outer membrane biogenesis; lipopolysaccharide biosynthesis. Its function is as follows. Activates KDO (a required 8-carbon sugar) for incorporation into bacterial lipopolysaccharide in Gram-negative bacteria. The sequence is that of 3-deoxy-manno-octulosonate cytidylyltransferase from Bartonella bacilliformis (strain ATCC 35685 / KC583 / Herrer 020/F12,63).